Here is a 188-residue protein sequence, read N- to C-terminus: Adenylate kinase (188 aa).

ATP is bound at residue 12–17 (GVGKGT). Residues 32–61 (STGDIFRSAMANHTELGDKAKSFMDAGNLV) form an NMP region. Residues Thr33, Arg38, 59 to 61 (NLV), 89 to 92 (GYPR), and Gln96 contribute to the AMP site. Residues 130–136 (GRGREDD) are LID. Position 131 (Arg131) interacts with ATP. AMP-binding residues include Arg133 and Arg144. Gly172 contacts ATP.

This sequence belongs to the adenylate kinase family. As to quaternary structure, monomer.

The protein resides in the cytoplasm. The catalysed reaction is AMP + ATP = 2 ADP. Its pathway is purine metabolism; AMP biosynthesis via salvage pathway; AMP from ADP: step 1/1. Its function is as follows. Catalyzes the reversible transfer of the terminal phosphate group between ATP and AMP. Plays an important role in cellular energy homeostasis and in adenine nucleotide metabolism. This Oenococcus oeni (strain ATCC BAA-331 / PSU-1) protein is Adenylate kinase.